The sequence spans 912 residues: Serine/threonine-protein kinase D1 (912 aa).

Y95 is modified (phosphotyrosine). The Phorbol-ester/DAG-type 1 zinc finger occupies 146-196 (PHALFVHSYRAPAFCDHCGEMLWGLVRQGLKCEGCGLNYHKRCAFKIPNNC). Residues S205, S208, S219, and S223 each carry the phosphoserine modification. A Phorbol-ester/DAG-type 2 zinc finger spans residues 270–320 (PHTFVIHSYTRPTVCQYCKKLLKGLFRQGLQCKDCRFNCHKRCAPKVPNNC). The residue at position 345 (S345) is a Phosphoserine. The interval 377–402 (NDSGEMQDPDPDHEDANRTISPSTSN) is disordered. Phosphoserine; by MAPK13 occurs at positions 397 and 401. The PH domain occupies 422 to 541 (TVMKEGWMVH…WEIAIQHALM (120 aa)). Phosphotyrosine is present on Y432. S448 carries the phosphoserine modification. The residue at position 463 (Y463) is a Phosphotyrosine; by ABL. Position 473 is a phosphoserine (S473). Y502 bears the Phosphotyrosine mark. A Phosphoserine modification is found at S548. The Protein kinase domain maps to 583-839 (IFPDEVLGSG…VDKTLSHPWL (257 aa)). ATP is bound by residues 589–597 (LGSGQFGIV) and K612. The active-site Proton acceptor is the D706. S738 carries the post-translational modification Phosphoserine; by PKC/PRKCD. Phosphoserine; by autocatalysis and PKC/PRKCD is present on S742. Y749 carries the post-translational modification Phosphotyrosine. Phosphoserine; by autocatalysis is present on S910.

It belongs to the protein kinase superfamily. CAMK Ser/Thr protein kinase family. PKD subfamily. As to quaternary structure, interacts (via N-terminus) with ADAP1/CENTA1. Interacts with MAPK13. Interacts with DAPK1 in an oxidative stress-regulated manner. Interacts with USP28; the interaction induces phosphorylation of USP28 and activated KRAS-mediated stabilization of ZNF304. Interacts with AKAP13 (via C-terminal domain). Requires Mg(2+) as cofactor. Post-translationally, phosphorylated at Ser-397 and Ser-401 by MAPK13 during regulation of insulin secretion in pancreatic beta cells. Phosphorylated by DAPK1. Phosphorylated at Tyr-95 and by ABL at Tyr-463, which primes the kinase in response to oxidative stress, and promotes a second step activating phosphorylation at Ser-738/Ser-742 by PKRD. Phosphorylated on Ser-910 upon S.enterica infection in macrophages.

The protein resides in the cytoplasm. It localises to the cell membrane. It is found in the golgi apparatus. Its subcellular location is the trans-Golgi network. The enzyme catalyses L-seryl-[protein] + ATP = O-phospho-L-seryl-[protein] + ADP + H(+). The catalysed reaction is L-threonyl-[protein] + ATP = O-phospho-L-threonyl-[protein] + ADP + H(+). With respect to regulation, activated by DAG and phorbol esters. Phorbol-ester/DAG-type domain 1 binds DAG with high affinity and appears to play the dominant role in mediating translocation to the cell membrane and trans-Golgi network. Phorbol-ester/DAG-type domain 2 binds phorbol ester with higher affinity. Autophosphorylation of Ser-742 and phosphorylation of Ser-738 by PKC relieves auto-inhibition by the PH domain. Phosphorylation on Tyr-463 by the SRC-ABL1 pathway in response to oxidative stress, is also required for activation. Activated by DAPK1 under oxidative stress. Functionally, serine/threonine-protein kinase that converts transient diacylglycerol (DAG) signals into prolonged physiological effects downstream of PKC, and is involved in the regulation of MAPK8/JNK1 and Ras signaling, Golgi membrane integrity and trafficking, cell survival through NF-kappa-B activation, cell migration, cell differentiation by mediating HDAC7 nuclear export, cell proliferation via MAPK1/3 (ERK1/2) signaling, and plays a role in cardiac hypertrophy, VEGFA-induced angiogenesis, genotoxic-induced apoptosis and flagellin-stimulated inflammatory response. Phosphorylates the epidermal growth factor receptor (EGFR) on dual threonine residues, which leads to the suppression of epidermal growth factor (EGF)-induced MAPK8/JNK1 activation and subsequent JUN phosphorylation. Phosphorylates RIN1, inducing RIN1 binding to 14-3-3 proteins YWHAB, YWHAE and YWHAZ and increased competition with RAF1 for binding to GTP-bound form of Ras proteins (NRAS, HRAS and KRAS). Acts downstream of the heterotrimeric G-protein beta/gamma-subunit complex to maintain the structural integrity of the Golgi membranes, and is required for protein transport along the secretory pathway. In the trans-Golgi network (TGN), regulates the fission of transport vesicles that are on their way to the plasma membrane. May act by activating the lipid kinase phosphatidylinositol 4-kinase beta (PI4KB) at the TGN for the local synthesis of phosphorylated inositol lipids, which induces a sequential production of DAG, phosphatidic acid (PA) and lyso-PA (LPA) that are necessary for membrane fission and generation of specific transport carriers to the cell surface. Under oxidative stress, is phosphorylated at Tyr-463 via SRC-ABL1 and contributes to cell survival by activating IKK complex and subsequent nuclear translocation and activation of NFKB1. Involved in cell migration by regulating integrin alpha-5/beta-3 recycling and promoting its recruitment in newly forming focal adhesion. In osteoblast differentiation, mediates the bone morphogenetic protein 2 (BMP2)-induced nuclear export of HDAC7, which results in the inhibition of HDAC7 transcriptional repression of RUNX2. In neurons, plays an important role in neuronal polarity by regulating the biogenesis of TGN-derived dendritic vesicles, and is involved in the maintenance of dendritic arborization and Golgi structure in hippocampal cells. May potentiate mitogenesis induced by the neuropeptide bombesin or vasopressin by mediating an increase in the duration of MAPK1/3 (ERK1/2) signaling, which leads to accumulation of immediate-early gene products including FOS that stimulate cell cycle progression. Plays an important role in the proliferative response induced by low calcium in keratinocytes, through sustained activation of MAPK1/3 (ERK1/2) pathway. Downstream of novel PKC signaling, plays a role in cardiac hypertrophy by phosphorylating HDAC5, which in turn triggers XPO1/CRM1-dependent nuclear export of HDAC5, MEF2A transcriptional activation and induction of downstream target genes that promote myocyte hypertrophy and pathological cardiac remodeling. Mediates cardiac troponin I (TNNI3) phosphorylation at the PKA sites, which results in reduced myofilament calcium sensitivity, and accelerated crossbridge cycling kinetics. The PRKD1-HDAC5 pathway is also involved in angiogenesis by mediating VEGFA-induced specific subset of gene expression, cell migration, and tube formation. In response to VEGFA, is necessary and required for HDAC7 phosphorylation which induces HDAC7 nuclear export and endothelial cell proliferation and migration. During apoptosis induced by cytarabine and other genotoxic agents, PRKD1 is cleaved by caspase-3 at Asp-378, resulting in activation of its kinase function and increased sensitivity of cells to the cytotoxic effects of genotoxic agents. In epithelial cells, is required for transducing flagellin-stimulated inflammatory responses by binding and phosphorylating TLR5, which contributes to MAPK14/p38 activation and production of inflammatory cytokines. Acts as an activator of NLRP3 inflammasome assembly by mediating phosphorylation of NLRP3. May play a role in inflammatory response by mediating activation of NF-kappa-B. May be involved in pain transmission by directly modulating TRPV1 receptor. Plays a role in activated KRAS-mediated stabilization of ZNF304 in colorectal cancer (CRC) cells. Regulates nuclear translocation of transcription factor TFEB in macrophages upon live S.enterica infection. In Homo sapiens (Human), this protein is Serine/threonine-protein kinase D1 (PRKD1).